Reading from the N-terminus, the 394-residue chain is Alanine racemase 2 (394 aa).

The active-site Proton acceptor; specific for D-alanine is the Lys39. Lys39 is modified (N6-(pyridoxal phosphate)lysine). Residue Arg139 participates in substrate binding. Tyr272 serves as the catalytic Proton acceptor; specific for L-alanine. Residue Met320 coordinates substrate.

The protein belongs to the alanine racemase family. The cofactor is pyridoxal 5'-phosphate.

The catalysed reaction is L-alanine = D-alanine. It functions in the pathway amino-acid biosynthesis; D-alanine biosynthesis; D-alanine from L-alanine: step 1/1. Its function is as follows. Catalyzes the interconversion of L-alanine and D-alanine. May also act on other amino acids. In Bacillus subtilis (strain 168), this protein is Alanine racemase 2 (alr2).